A 119-amino-acid chain; its full sequence is Ribonuclease P protein component (119 aa).

Belongs to the RnpA family. In terms of assembly, consists of a catalytic RNA component (M1 or rnpB) and a protein subunit.

The catalysed reaction is Endonucleolytic cleavage of RNA, removing 5'-extranucleotides from tRNA precursor.. Functionally, RNaseP catalyzes the removal of the 5'-leader sequence from pre-tRNA to produce the mature 5'-terminus. It can also cleave other RNA substrates such as 4.5S RNA. The protein component plays an auxiliary but essential role in vivo by binding to the 5'-leader sequence and broadening the substrate specificity of the ribozyme. The protein is Ribonuclease P protein component of Nitrosomonas europaea (strain ATCC 19718 / CIP 103999 / KCTC 2705 / NBRC 14298).